A 227-amino-acid chain; its full sequence is MTAIAPVITIDGPSGAGKGTLCKAMAEALQWHLLDSGAIYRVLALAALHHHVDLASEDALVPLASHLDVRFVSTDGNLEVILEGEDVSGEIRTQEVANAASQVAAFPRVREALLRRQRAFREAPGLIADGRDMGTVVFPDAPVKIFLDASSEERAHRRMLQLQENGFSVNFEHLLAEIKERDDRDRNRAVAPLVPAADALVLDSTRLSIEQVIEKALQYARQKLALA.

12–20 (GPSGAGKGT) provides a ligand contact to ATP.

The protein belongs to the cytidylate kinase family. Type 1 subfamily.

Its subcellular location is the cytoplasm. It catalyses the reaction CMP + ATP = CDP + ADP. The catalysed reaction is dCMP + ATP = dCDP + ADP. This is Cytidylate kinase from Salmonella paratyphi A (strain ATCC 9150 / SARB42).